A 70-amino-acid chain; its full sequence is Gas vesicle protein A (70 aa).

It belongs to the gas vesicle GvpA family. In terms of assembly, the gas vesicle shell is 2 nm thick and consists of a single layer of this protein. It forms helical ribs nearly perpendicular to the long axis of the vesicle.

The protein resides in the gas vesicle shell. Gas vesicles are hollow, gas filled proteinaceous nanostructures found in some microorganisms. During planktonic growth they allow positioning of the organism at a favorable depth for light or nutrient acquisition. GvpA forms the protein shell. The protein is Gas vesicle protein A of Cereibacter sphaeroides (strain ATCC 17023 / DSM 158 / JCM 6121 / CCUG 31486 / LMG 2827 / NBRC 12203 / NCIMB 8253 / ATH 2.4.1.) (Rhodobacter sphaeroides).